We begin with the raw amino-acid sequence, 617 residues long: uncharacterized protein (617 aa).

Positions 33–134 (TEDDFRGEKF…FXNATKQKGS (102 aa)) constitute a B12-binding N-terminal domain. Methylcob(III)alamin contacts are provided by residues Glu84, 146–150 (GDVHD), His149, Ser194, Thr198, and Ala251. The 137-residue stretch at 136 to 272 (NGKVVIATVK…NPEGRAALWE (137 aa)) folds into the B12-binding domain. The 330-residue stretch at 288–617 (SKPLRKQLSI…MMKWLGVAMK (330 aa)) folds into the AdoMet activation domain. S-adenosyl-L-methionine contacts are provided by residues Asp337, Arg528, and 583–584 (YF).

Belongs to the vitamin-B12 dependent methionine synthase family.

This is an uncharacterized protein from Haemophilus influenzae (strain ATCC 51907 / DSM 11121 / KW20 / Rd).